Here is a 289-residue protein sequence, read N- to C-terminus: 4-diphosphocytidyl-2-C-methyl-D-erythritol kinase (289 aa).

Lysine 10 is an active-site residue. 99–109 (PMGGGLGGGSS) provides a ligand contact to ATP. Residue aspartate 141 is part of the active site.

It belongs to the GHMP kinase family. IspE subfamily. As to quaternary structure, homodimer.

It catalyses the reaction 4-CDP-2-C-methyl-D-erythritol + ATP = 4-CDP-2-C-methyl-D-erythritol 2-phosphate + ADP + H(+). It participates in isoprenoid biosynthesis; isopentenyl diphosphate biosynthesis via DXP pathway; isopentenyl diphosphate from 1-deoxy-D-xylulose 5-phosphate: step 3/6. Catalyzes the phosphorylation of the position 2 hydroxy group of 4-diphosphocytidyl-2C-methyl-D-erythritol. The protein is 4-diphosphocytidyl-2-C-methyl-D-erythritol kinase of Enterobacter sp. (strain 638).